The sequence spans 547 residues: Chaperonin GroEL 2 (547 aa).

ATP contacts are provided by residues 29-32 (TLGP), 86-90 (DGTTT), G418, 482-484 (NAA), and D498.

It belongs to the chaperonin (HSP60) family. Forms a cylinder of 14 subunits composed of two heptameric rings stacked back-to-back. Interacts with the co-chaperonin GroES.

The protein localises to the cytoplasm. The enzyme catalyses ATP + H2O + a folded polypeptide = ADP + phosphate + an unfolded polypeptide.. Functionally, together with its co-chaperonin GroES, plays an essential role in assisting protein folding. The GroEL-GroES system forms a nano-cage that allows encapsulation of the non-native substrate proteins and provides a physical environment optimized to promote and accelerate protein folding. This Corynebacterium efficiens (strain DSM 44549 / YS-314 / AJ 12310 / JCM 11189 / NBRC 100395) protein is Chaperonin GroEL 2.